The chain runs to 58 residues: Large ribosomal subunit protein uL30 (58 aa).

Belongs to the universal ribosomal protein uL30 family. Part of the 50S ribosomal subunit.

The chain is Large ribosomal subunit protein uL30 from Acinetobacter baylyi (strain ATCC 33305 / BD413 / ADP1).